The chain runs to 42 residues: Photosystem I reaction center subunit IX (42 aa).

A helical membrane pass occupies residues 7–27 (YLSTAPVLSALWFAILAGLLI).

The protein belongs to the PsaJ family.

It localises to the plastid. The protein localises to the chloroplast thylakoid membrane. May help in the organization of the PsaE and PsaF subunits. The sequence is that of Photosystem I reaction center subunit IX from Chlorokybus atmophyticus (Soil alga).